A 175-amino-acid chain; its full sequence is NADH dehydrogenase [ubiquinone] 1 alpha subcomplex assembly factor 4 (175 aa).

Gly2 is lipidated: N-myristoyl glycine. Phosphoserine is present on Ser35.

The protein belongs to the NDUFAF4 family. As to quaternary structure, binds calmodulin. Interacts with NDUFAF3. In terms of assembly, (Microbial infection) Interacts with the vesicular stomatitis virus matrix protein/M; the interaction inhibits viral propagation. Post-translationally, phosphorylated on serine. Prolactin stimulate serine phosphorylation.

The protein resides in the mitochondrion. It localises to the membrane. Functionally, involved in the assembly of mitochondrial NADH:ubiquinone oxidoreductase complex (complex I). May be involved in cell proliferation and survival of hormone-dependent tumor cells. May be a regulator of breast tumor cell invasion. The protein is NADH dehydrogenase [ubiquinone] 1 alpha subcomplex assembly factor 4 of Homo sapiens (Human).